Reading from the N-terminus, the 120-residue chain is Large ribosomal subunit protein bL19 (120 aa).

The protein belongs to the bacterial ribosomal protein bL19 family.

In terms of biological role, this protein is located at the 30S-50S ribosomal subunit interface and may play a role in the structure and function of the aminoacyl-tRNA binding site. This Synechococcus sp. (strain ATCC 27144 / PCC 6301 / SAUG 1402/1) (Anacystis nidulans) protein is Large ribosomal subunit protein bL19.